Here is a 124-residue protein sequence, read N- to C-terminus: Large ribosomal subunit protein eL22z (124 aa).

The protein belongs to the eukaryotic ribosomal protein eL22 family.

This Arabidopsis thaliana (Mouse-ear cress) protein is Large ribosomal subunit protein eL22z (RPL22B).